Consider the following 174-residue polypeptide: Zinc finger AN1 domain-containing stress-associated protein 15 (174 aa).

The disordered stretch occupies residues 1 to 61 (MAQESCDLNK…TPPAAAAAAS (61 aa)). Residues 18-41 (PSSSSSPSPSPTTASPSPPTAQMT) show a composition bias toward low complexity. The segment covering 42–54 (EPPPPQSTPPTPP) has biased composition (pro residues). The AN1-type zinc finger occupies 109-155 (VLFVNRCNVCRKRVGLTGFRCRCGELFCPRHRHSETHECSFDYKTAG). The Zn(2+) site is built by Cys115, Cys118, Cys129, Cys131, Cys136, His139, His145, and Cys147.

Its function is as follows. May be involved in environmental stress response. In Oryza sativa subsp. japonica (Rice), this protein is Zinc finger AN1 domain-containing stress-associated protein 15 (SAP15).